We begin with the raw amino-acid sequence, 267 residues long: PF03932 family protein CutC (267 aa).

This sequence belongs to the CutC family.

The protein resides in the cytoplasm. The chain is PF03932 family protein CutC from Xylella fastidiosa (strain Temecula1 / ATCC 700964).